We begin with the raw amino-acid sequence, 327 residues long: Acyl-CoA desaturase (327 aa).

The Cytoplasmic portion of the chain corresponds to 1-39 (MPDREIKSPIWHPEPGTVEDVFDHTYKEKEGPKPPTVIV). The helical transmembrane segment at 40-60 (WRNVILMSLLHLGALYGLFLF) threads the bilayer. Substrate is bound at residue N42. Residues 61-64 (PSAR) lie on the Lumenal side of the membrane. A helical membrane pass occupies residues 65–85 (ALTWIWFFGCLLFSALGITAG). The Cytoplasmic segment spans residues 86-184 (AHRLWSHRSY…DKVVMFQRRF (99 aa)). Residues H87 and H92 each coordinate Fe cation. The Histidine box-1 signature appears at 87-92 (HRLWSH). Substrate contacts are provided by N115, R122, and D123. Fe cation contacts are provided by H124, H127, and H128. The Histidine box-2 signature appears at 124–128 (HRVHH). Residues R155 and K156 each contribute to the substrate site. Residues 185 to 204 (YKPSVLLMCFFVPTFVPWYV) traverse the membrane as a helical segment. Topologically, residues 205 to 208 (WGES) are lumenal. Residues 209 to 230 (LWVAYFVPALLRYALVLNATWL) traverse the membrane as a helical segment. W229 contacts substrate. The Cytoplasmic portion of the chain corresponds to 231–327 (VNSAAHMWGN…RTGDGSHWSG (97 aa)). H236, H265, H268, and H269 together coordinate Fe cation. The Histidine box-3 motif lies at 265 to 269 (HNYHH).

Belongs to the fatty acid desaturase type 1 family. Fe(2+) serves as cofactor.

The protein resides in the endoplasmic reticulum membrane. The catalysed reaction is octadecanoyl-CoA + 2 Fe(II)-[cytochrome b5] + O2 + 2 H(+) = (9Z)-octadecenoyl-CoA + 2 Fe(III)-[cytochrome b5] + 2 H2O. Stearoyl-CoA desaturase that utilizes O(2) and electrons from reduced cytochrome b5 to introduce the first double bond into saturated fatty acyl-CoA substrates. Has high specificity and catalyzes the insertion of a cis double bond at the delta-9 position into fatty acyl-CoA substrates including palmitoyl-CoA and stearoyl-CoA. Contributes to the biosynthesis of membrane phospholipids, cholesterol esters and triglycerides. The protein is Acyl-CoA desaturase of Cyprinus carpio (Common carp).